The following is a 220-amino-acid chain: Deoxyribose-phosphate aldolase 2 (220 aa).

The Proton donor/acceptor role is filled by aspartate 89. The active-site Schiff-base intermediate with acetaldehyde is the lysine 151. Residue lysine 180 is the Proton donor/acceptor of the active site.

Belongs to the DeoC/FbaB aldolase family. DeoC type 1 subfamily.

It is found in the cytoplasm. The enzyme catalyses 2-deoxy-D-ribose 5-phosphate = D-glyceraldehyde 3-phosphate + acetaldehyde. The protein operates within carbohydrate degradation; 2-deoxy-D-ribose 1-phosphate degradation; D-glyceraldehyde 3-phosphate and acetaldehyde from 2-deoxy-alpha-D-ribose 1-phosphate: step 2/2. Functionally, catalyzes a reversible aldol reaction between acetaldehyde and D-glyceraldehyde 3-phosphate to generate 2-deoxy-D-ribose 5-phosphate. The protein is Deoxyribose-phosphate aldolase 2 of Staphylococcus aureus (strain MRSA252).